Consider the following 205-residue polypeptide: uncharacterized protein (205 aa).

Residues serine 119 and histidine 160 each act as charge relay system in the active site.

The protein belongs to the peptidase S51 family.

This is an uncharacterized protein from Listeria monocytogenes serovar 1/2a (strain ATCC BAA-679 / EGD-e).